Here is a 182-residue protein sequence, read N- to C-terminus: UPF0587 protein YCR090C (182 aa).

Zn(2+) is bound by residues Cys-36, Cys-39, Cys-70, and Cys-73.

The protein belongs to the UPF0587 family.

This Saccharomyces cerevisiae (strain ATCC 204508 / S288c) (Baker's yeast) protein is UPF0587 protein YCR090C.